The sequence spans 270 residues: Pancreas transcription factor 1 subunit alpha (270 aa).

The 53-residue stretch at Q119 to L171 folds into the bHLH domain.

Its subcellular location is the nucleus. Transcription factor implicated in the cell fate determination in various organs. Binds to the E-box consensus sequence 5'-CANNTG-3'. Acts together with pdx1 to induce the pancreatic lineage within the endoderm. Plays a central role in directing the differentiation of retinal progenitors towards horizontal and amacrine fates. The protein is Pancreas transcription factor 1 subunit alpha (ptf1a) of Xenopus laevis (African clawed frog).